A 1331-amino-acid chain; its full sequence is MTADELVFFVNGKKVVEKNADPETTLLAYLRRKLGLSGTKLGCGEGGCGACTVMLSKYDRFQNKIVHFSANACLAPICSLHHVAVTTVEGIGSTKSRLHPVQERIAKSHGSQCGFCTPGIVMSMYTLLRNQPEPTIEEIEDAFQGNLCRCTGYRPILQGFRTFARDGGCCGGSGNDLNCCMNQKTDHKITLSPSLFNPEEFTPLDPTQEPIFPPELLRLKDTPQKQLRFEGERVTWIQASTLQELLDLKAQDPEAKLVVGNTEIGIEMKFKNMLFPKMVCPAWIPEPVEHGPEGISFGASCPLSLVEKTLLDAVANLPAHQTEVFKGVLEQLRWFAGKQVKSVASIGGNIITASPISDLNPVFMASGAKLTIVSTGTRRTVRMDHTFFPAYRKTLLAPEEILLSIEIPYSREGEYFSAFKQASRREDDIAKVTSGMRVLFNPGTAQVKELALCYGGMHDRTVSALQTTRKQISNFWNEELLQNVCAGLAEELSLAPDAPGGMVEFRRTLTLSFFFKFYLTVLQKLGIQNSKDKCGKLDPTHASATLLFQKDPPANVQLFQEVPKGQCEEDMVGRPLPHLAAAMQASGEAVYCDDIPRYENELSLRLVTSTRAHAKIKSIDTSEAQKVPGFVCFISADDVPGSNITGIGNDEMVFAKDKVTCIGHIIGAVVTDTREHAQRAAQAVRITYEDLPAIITIEDAIAKDSFYEPELKIEKGNLTKGFSEADNIVSGELYIGGQEHFYLETHCTIAVPKGEAGEMELFVSTQNTTKTQSFVANMLGVPANRILVRVKRMGGGFGGKETRSTVVSTAVPLAAYKTGRPVRCMLDRDEDMLITGGRHPFLARYKVGFMKTGRVVALKVEHYSNAGNTLDLSQSIMERALFHMDNCYNIPNIRGTGRICKTNLPSNTAFRGFGGPQGMLIAEHWMSEVAVTCGLPAEEVRRKNMYKEGDLTHFNQKLEGFTLPRCWEECLASSQYHARKREADKFNEENCWKKRGLSIIPTKFGISFTVPFLNQAGALVHVYTDGSVLLTHGGTEMGQGLHTKMVQVASRALKIPTSKIYISETSTNTVPNTSPTAASVSTDINGQAVYEACQTILKRLEPFKKKNPSGSWEDWVTAAYLDAVSLSATGFYKTPNIGYSFETNSGNPFHYFSYGVACSEVEIDCLTGDHKNLRTDIVMDVGSSLNPAIDIGQVEGAFVQGLGLFTLEELHYSPEGSLHTRGPSTYKIPAFGSIPSEFRVSLLRDCPNKKAIYASKAVGEPPLFLAASIFFAIKDAICAARAGNPDCKTKKLFQLNSPATPEKIRNACVDQFTRLCVTGTAESCKPWSVRV.

The 88-residue stretch at 4–91 folds into the 2Fe-2S ferredoxin-type domain; sequence DELVFFVNGK…HVAVTTVEGI (88 aa). Residues Cys43, Cys48, Cys51, Cys73, Cys113, Cys116, Cys148, and Cys150 each coordinate [2Fe-2S] cluster. The region spanning 229–412 is the FAD-binding PCMH-type domain; the sequence is FEGERVTWIQ…LSIEIPYSRE (184 aa). FAD is bound by residues 257 to 264, Phe335, 345 to 349, Asp358, Leu402, and Lys420; these read LVVGNTEI and SIGGN. An intrachain disulfide couples Cys534 to Cys991. The Mo-molybdopterin site is built by Gln766 and Phe797. The substrate site is built by Glu801 and Arg879. Residue Arg911 participates in Mo-molybdopterin binding. 2 residues coordinate substrate: Phe913 and Thr1009. Residue Ala1078 coordinates Mo-molybdopterin. The active-site Proton acceptor is Glu1260.

It belongs to the xanthine dehydrogenase family. Homodimer. Interacts with BTN1A1. Requires FAD as cofactor. Mo-molybdopterin is required as a cofactor. [2Fe-2S] cluster serves as cofactor. Subject to partial proteolysis; this alters the enzyme from the dehydrogenase form (D) to the oxidase form (O). In terms of processing, contains sulfhydryl groups that are easily oxidized (in vitro); this alters the enzyme from the dehydrogenase form (D) to the oxidase form (O).

It is found in the cytoplasm. Its subcellular location is the peroxisome. The protein localises to the secreted. It catalyses the reaction xanthine + NAD(+) + H2O = urate + NADH + H(+). It carries out the reaction hypoxanthine + NAD(+) + H2O = xanthine + NADH + H(+). The catalysed reaction is xanthine + O2 + H2O = urate + H2O2. Its activity is regulated as follows. Can be converted from the dehydrogenase form (D) to the oxidase form (O) irreversibly by proteolysis or reversibly through the oxidation of sulfhydryl groups. Functionally, key enzyme in purine degradation. Catalyzes the oxidation of hypoxanthine to xanthine. Catalyzes the oxidation of xanthine to uric acid. Contributes to the generation of reactive oxygen species. This is Xanthine dehydrogenase/oxidase (XDH) from Felis catus (Cat).